A 264-amino-acid polypeptide reads, in one-letter code: Glutamate racemase (264 aa).

Substrate is bound by residues 10–11 and 42–43; these read DS and YG. The active-site Proton donor/acceptor is the C73. 74-75 serves as a coordination point for substrate; it reads NT. The active-site Proton donor/acceptor is C183. 184–185 lines the substrate pocket; that stretch reads TH.

This sequence belongs to the aspartate/glutamate racemases family.

The enzyme catalyses L-glutamate = D-glutamate. It participates in cell wall biogenesis; peptidoglycan biosynthesis. Its function is as follows. Provides the (R)-glutamate required for cell wall biosynthesis. This Streptococcus pneumoniae serotype 19F (strain G54) protein is Glutamate racemase.